Consider the following 410-residue polypeptide: Mitochondrial potassium channel (410 aa).

The N-terminal 35 residues, 1–35 (MTGCSPVFTMQQVVGVSHRLVWRTFRGTDLLMTRT), are a transit peptide targeting the mitochondrion. Residues 36–201 (LCSPGPSRPG…KERTRAERTK (166 aa)) are Mitochondrial matrix-facing. Positions 116 to 143 (VREAREDLEAQQTKLKEVRDRLDRVSRE) form a coiled coil. A helical transmembrane segment spans residues 202–222 (NWSLIGSVLGALIGVAGSTYV). Residues 223-385 (NRVRLQELKA…RLEAQANRNA (163 aa)) are Mitochondrial intermembrane-facing. The disordered stretch occupies residues 276 to 296 (GQDQGSGSPTGPSSPRGKDID). A compositionally biased stretch (low complexity) spans 280 to 290 (GSGSPTGPSSP). The helical transmembrane segment at 386–406 (ISSTLVTCVTFMATLPLLYML) threads the bilayer. Residues 407–410 (FKTS) are Mitochondrial matrix-facing.

As to quaternary structure, the mitochondrial potassium channel (mitoK(ATP)) forms a heteromultimer.

The protein resides in the mitochondrion inner membrane. The enzyme catalyses K(+)(in) = K(+)(out). Its activity is regulated as follows. Channel activity inhibited by ATP via ABCB8/MITOSUR subunit. Its function is as follows. Pore-forming subunit of the mitochondrial ATP-gated potassium channel (mitoK(ATP)). Together with ATP-binding subunit ABCB8/MITOSUR of the mitoK(ATP) channel, mediates ATP-dependent K(+) currents across the mitochondrial inner membrane. An increase in ATP intracellular levels closes the channel, inhibiting K(+) transport, whereas a decrease in ATP levels enhances K(+) uptake in the mitochondrial matrix. May contribute to the homeostatic control of cellular metabolism under stress conditions by regulating the mitochondrial matrix volume. This is Mitochondrial potassium channel from Rattus norvegicus (Rat).